The primary structure comprises 138 residues: Large ribosomal subunit protein uL16 (138 aa).

This sequence belongs to the universal ribosomal protein uL16 family. Part of the 50S ribosomal subunit.

Its function is as follows. Binds 23S rRNA and is also seen to make contacts with the A and possibly P site tRNAs. This chain is Large ribosomal subunit protein uL16, found in Mycoplasma genitalium (strain ATCC 33530 / DSM 19775 / NCTC 10195 / G37) (Mycoplasmoides genitalium).